The sequence spans 242 residues: Eukaryotic translation initiation factor 4E type 1B (242 aa).

The segment at 1–42 (MLAVEVSEAEGGIREWEEEEKEEEAAERTPTGEKSPNSPRTL) is disordered. Residues 16 to 25 (WEEEEKEEEA) are compositionally biased toward acidic residues. A compositionally biased stretch (polar residues) spans 32-41 (GEKSPNSPRT). Residues 62–65 (HPLQ) form an EIF4EBP1/2/3 binding region. An mRNA-binding site is contributed by 81 to 82 (WQ). The tract at residues 98–102 (WALYS) is EIF4EBP1/2/3 binding. Position 127-128 (127-128 (WE)) interacts with mRNA. Positions 157 to 164 (ETLLCLIG) are EIF4EBP1/2/3 binding. MRNA-binding positions include 182 to 187 (RTKGDK) and 230 to 232 (TKS).

Belongs to the eukaryotic initiation factor 4E family. EIF4F is a multi-subunit complex, the composition of which varies with external and internal environmental conditions. It is composed of at least EIF4A, EIF4E and EIF4G.

Functionally, recognizes and binds the 7-methylguanosine-containing mRNA cap during an early step in the initiation of protein synthesis and facilitates ribosome binding by inducing the unwinding of the mRNAs secondary structure. The polypeptide is Eukaryotic translation initiation factor 4E type 1B (EIF4E1B) (Homo sapiens (Human)).